Here is a 22-residue protein sequence, read N- to C-terminus: Hemocyanin subunit 4 (22 aa).

This sequence belongs to the tyrosinase family. Hemocyanin subfamily. As to expression, hemolymph.

It localises to the secreted. The protein resides in the extracellular space. Functionally, hemocyanins are copper-containing oxygen carriers occurring freely dissolved in the hemolymph of many mollusks and arthropods. The protein is Hemocyanin subunit 4 of Homarus americanus (American lobster).